The sequence spans 31 residues: L-amino-acid oxidase (31 aa).

Belongs to the flavin monoamine oxidase family. FIG1 subfamily. In terms of assembly, homodimer; non-covalently linked. FAD is required as a cofactor. N-glycosylated. As to expression, expressed by the venom gland.

The protein localises to the secreted. It carries out the reaction an L-alpha-amino acid + O2 + H2O = a 2-oxocarboxylate + H2O2 + NH4(+). The catalysed reaction is L-leucine + O2 + H2O = 4-methyl-2-oxopentanoate + H2O2 + NH4(+). It catalyses the reaction L-phenylalanine + O2 + H2O = 3-phenylpyruvate + H2O2 + NH4(+). The enzyme catalyses L-histidine + O2 + H2O = 3-(imidazol-5-yl)pyruvate + H2O2 + NH4(+). Functionally, catalyzes an oxidative deamination of predominantly hydrophobic and aromatic L-amino acids, thus producing hydrogen peroxide that may contribute to the diverse toxic effects of this enzyme. Is moderately active on L-Leu, L-His, and L-Phe, and very weakly active on L-Thr, and L-Cys. Exhibits diverse biological activities, such as hemorrhage, hemolysis, edema, antibacterial and antiparasitic activities, as well as regulation of platelet aggregation. Its effect on platelets is controversial, since it either induces aggregation or inhibits agonist-induced aggregation. These different effects are probably due to different experimental conditions. Inhibits growth of B.subtilis strain ATCC 6633 (MIC=32 uM), E.faecalis strain ATCC 12953 (MIC=32 uM), S.aureus strain ATCC 29213 (MIC=32 uM), S.pyogenes strain ATCC 19615 (MIC=8 uM), E.coli strain ATCC 8739 (MIC=4 uM), K.pneumoniae strain ATCC 13885 (MIC=2 uM), P.mirabilis strain ATCC 25933 (MIC=2 uM), P.aeruginosa strain ATCC 15442 (MIC=8 uM) and S.typhimurium strain ATCC 14028 (MIC=8 uM). The polypeptide is L-amino-acid oxidase (Bothrops mattogrossensis (Pitviper)).